The primary structure comprises 350 residues: UDP-3-O-acylglucosamine N-acyltransferase (350 aa).

His244 acts as the Proton acceptor in catalysis.

This sequence belongs to the transferase hexapeptide repeat family. LpxD subfamily. Homotrimer.

It catalyses the reaction a UDP-3-O-[(3R)-3-hydroxyacyl]-alpha-D-glucosamine + a (3R)-hydroxyacyl-[ACP] = a UDP-2-N,3-O-bis[(3R)-3-hydroxyacyl]-alpha-D-glucosamine + holo-[ACP] + H(+). The protein operates within bacterial outer membrane biogenesis; LPS lipid A biosynthesis. Its function is as follows. Catalyzes the N-acylation of UDP-3-O-acylglucosamine using 3-hydroxyacyl-ACP as the acyl donor. Is involved in the biosynthesis of lipid A, a phosphorylated glycolipid that anchors the lipopolysaccharide to the outer membrane of the cell. The protein is UDP-3-O-acylglucosamine N-acyltransferase of Janthinobacterium sp. (strain Marseille) (Minibacterium massiliensis).